The sequence spans 306 residues: Acetyl-coenzyme A carboxylase carboxyl transferase subunit beta (306 aa).

Residues 25–294 (LWIKDPTSGE…VVTPSPPSPT (270 aa)) enclose the CoA carboxyltransferase N-terminal domain. The tract at residues 284–306 (AVVTPSPPSPTDSQTSLSKTKAA) is disordered.

It belongs to the AccD/PCCB family. In terms of assembly, acetyl-CoA carboxylase is a heterohexamer composed of biotin carboxyl carrier protein (AccB), biotin carboxylase (AccC) and two subunits each of ACCase subunit alpha (AccA) and ACCase subunit beta (AccD).

Its subcellular location is the cytoplasm. The catalysed reaction is N(6)-carboxybiotinyl-L-lysyl-[protein] + acetyl-CoA = N(6)-biotinyl-L-lysyl-[protein] + malonyl-CoA. Its pathway is lipid metabolism; malonyl-CoA biosynthesis; malonyl-CoA from acetyl-CoA: step 1/1. Functionally, component of the acetyl coenzyme A carboxylase (ACC) complex. Biotin carboxylase (BC) catalyzes the carboxylation of biotin on its carrier protein (BCCP) and then the CO(2) group is transferred by the transcarboxylase to acetyl-CoA to form malonyl-CoA. The sequence is that of Acetyl-coenzyme A carboxylase carboxyl transferase subunit beta from Bartonella tribocorum (strain CIP 105476 / IBS 506).